The chain runs to 388 residues: Succinate--CoA ligase [ADP-forming] subunit beta (388 aa).

The ATP-grasp domain occupies 9-244 (KQLFAEFGLP…PSQEDEREAH (236 aa)). Residues Lys-46, 53 to 55 (GRG), Glu-99, Ser-102, and Glu-107 each bind ATP. 2 residues coordinate Mg(2+): Asn-199 and Asp-213. Substrate is bound by residues Asn-264 and 321–323 (GIV).

The protein belongs to the succinate/malate CoA ligase beta subunit family. As to quaternary structure, heterotetramer of two alpha and two beta subunits. Mg(2+) is required as a cofactor.

It catalyses the reaction succinate + ATP + CoA = succinyl-CoA + ADP + phosphate. The catalysed reaction is GTP + succinate + CoA = succinyl-CoA + GDP + phosphate. Its pathway is carbohydrate metabolism; tricarboxylic acid cycle; succinate from succinyl-CoA (ligase route): step 1/1. Functionally, succinyl-CoA synthetase functions in the citric acid cycle (TCA), coupling the hydrolysis of succinyl-CoA to the synthesis of either ATP or GTP and thus represents the only step of substrate-level phosphorylation in the TCA. The beta subunit provides nucleotide specificity of the enzyme and binds the substrate succinate, while the binding sites for coenzyme A and phosphate are found in the alpha subunit. This is Succinate--CoA ligase [ADP-forming] subunit beta from Vibrio campbellii (strain ATCC BAA-1116).